The primary structure comprises 162 residues: Peroxiredoxin-2B (162 aa).

Residues I4 to L162 form the Thioredoxin domain. C51 acts as the Cysteine sulfenic acid (-SOH) intermediate in catalysis.

Belongs to the peroxiredoxin family. Prx5 subfamily. In terms of assembly, monomer. Expressed in all tissues but mostly in reproductive tissues such as buds, flowers, siliques and seeds.

Its subcellular location is the cytoplasm. The enzyme catalyses [glutaredoxin]-dithiol + a hydroperoxide = [glutaredoxin]-disulfide + an alcohol + H2O. Its function is as follows. Reduces hydrogen peroxide and alkyl hydroperoxides with reducing equivalents provided through the thioredoxin or glutaredoxin system. May be involved in intracellular redox signaling. In terms of biological role, thiol-specific peroxidase that catalyzes the reduction of hydrogen peroxide and organic hydroperoxides to water and alcohols, respectively. Plays a role in cell protection against oxidative stress by detoxifying peroxides and as sensor of hydrogen peroxide-mediated signaling events. The protein is Peroxiredoxin-2B (PRXIIB) of Arabidopsis thaliana (Mouse-ear cress).